A 693-amino-acid polypeptide reads, in one-letter code: Lamina-associated polypeptide 2, isoforms alpha/zeta (693 aa).

In terms of domain architecture, LEM-like spans 5–48 (LEDPSVLTKDKLKSELVANNVTLPAGEQRKDVYVQLYLQHLTAR). 3 disordered regions span residues 48 to 113 (RNRP…DVTE), 148 to 211 (LREQ…LAST), and 227 to 270 (TRPP…KLAP). The segment at 49 to 107 (NRPPLAAGANSKGPPDFSSDEEREPTPVLGSGASVGRGRGAVGRKATKKTDKPRLEDKD) is linker. Residues Ser59, Ser66, and Ser67 each carry the phosphoserine modification. Thr74 bears the Phosphothreonine mark. Phosphoserine occurs at positions 79 and 82. 2 positions are modified to omega-N-methylarginine: Arg85 and Arg87. Basic and acidic residues predominate over residues 96-105 (KKTDKPRLED). The LEM domain occupies 108 to 152 (DLDVTELSNEELLDQLVRYGVNPGPIVGTTRKLYEKKLLKLREQG). At Thr153 the chain carries Phosphothreonine. Polar residues predominate over residues 154 to 177 (ESRSSTPLPTVSSSAENTRQNGSN). Ser155 and Ser158 each carry phosphoserine. Residues Thr159 and Thr163 each carry the phosphothreonine modification. 2 positions are modified to phosphoserine: Ser165 and Ser167. The span at 178–190 (DSDRYSDNDEGKK) shows a compositional bias: basic and acidic residues. Positions 190–196 (KKEHKKV) match the Nuclear localization signal motif. Ser206 carries the N6-acetyllysine modification. A compositionally biased stretch (basic and acidic residues) spans 245–254 (TKRDPPRETC). Phosphoserine is present on Ser310. Arg329 is subject to Omega-N-methylarginine. The tract at residues 332–351 (KSRAQPLRAEEPGVSDQSVF) is disordered. A phosphoserine mark is found at Ser349, Ser352, Ser368, Ser420, and Ser422. The span at 412 to 422 (QSSYQDSESLS) shows a compositional bias: low complexity. The disordered stretch occupies residues 412–442 (QSSYQDSESLSPPRKVPRLSEKPARGGDSGS). Positions 557-656 (TESCDKHLDL…MGRRYLWLKD (100 aa)) form a coiled coil. Position 655 is an N6-acetyllysine (Lys655).

The protein belongs to the LEM family. Homooligomer. Interacts with LMNA, BANF1 and RB1 and with chromosomes. Associates directly or indirectly with lamins at specific cell-cycle stages. Interacts with CMTM6. In terms of processing, phosphorylated in a mitose-specific manner.

It localises to the nucleus. The protein localises to the chromosome. Functionally, may be involved in the structural organization of the nucleus and in the post-mitotic nuclear assembly. Plays an important role, together with LMNA, in the nuclear anchorage of RB1. The chain is Lamina-associated polypeptide 2, isoforms alpha/zeta (Tmpo) from Mus musculus (Mouse).